We begin with the raw amino-acid sequence, 265 residues long: Small ribosomal subunit protein uS2 (265 aa).

The interval 226-265 is disordered; that stretch reads AAAPNSASVREEEFSAESADEGKGRRAPAKKGDKKADAAE. The span at 245–265 shows a compositional bias: basic and acidic residues; that stretch reads DEGKGRRAPAKKGDKKADAAE.

The protein belongs to the universal ribosomal protein uS2 family.

This is Small ribosomal subunit protein uS2 from Xanthomonas euvesicatoria pv. vesicatoria (strain 85-10) (Xanthomonas campestris pv. vesicatoria).